Reading from the N-terminus, the 345-residue chain is Phenylalanine--tRNA ligase alpha subunit (345 aa).

Residue Glu253 coordinates Mg(2+).

The protein belongs to the class-II aminoacyl-tRNA synthetase family. Phe-tRNA synthetase alpha subunit type 1 subfamily. As to quaternary structure, tetramer of two alpha and two beta subunits. It depends on Mg(2+) as a cofactor.

The protein resides in the cytoplasm. The enzyme catalyses tRNA(Phe) + L-phenylalanine + ATP = L-phenylalanyl-tRNA(Phe) + AMP + diphosphate + H(+). This Lawsonia intracellularis (strain PHE/MN1-00) protein is Phenylalanine--tRNA ligase alpha subunit.